Here is a 58-residue protein sequence, read N- to C-terminus: Small ribosomal subunit protein bS21A (58 aa).

The interval 38–58 (YEKPSLRRKRKAEAARKGGRN) is disordered. Over residues 49-58 (AEAARKGGRN) the composition is skewed to basic and acidic residues.

Belongs to the bacterial ribosomal protein bS21 family.

The polypeptide is Small ribosomal subunit protein bS21A (Trichormus variabilis (strain ATCC 29413 / PCC 7937) (Anabaena variabilis)).